Here is a 198-residue protein sequence, read N- to C-terminus: Recombination protein RecR (198 aa).

The segment at 56-71 (CDTCGNVDTQNPCGIC) adopts a C4-type zinc-finger fold. The 96-residue stretch at 79 to 174 (KSICVVEDVA…RITQLAHGLP (96 aa)) folds into the Toprim domain.

This sequence belongs to the RecR family.

May play a role in DNA repair. It seems to be involved in an RecBC-independent recombinational process of DNA repair. It may act with RecF and RecO. This Erythrobacter litoralis (strain HTCC2594) protein is Recombination protein RecR.